The primary structure comprises 90 residues: Bombyxin B-9 (90 aa).

Residues 1–20 (MMKTAVMFILVVVISLTYSS) form the signal peptide. 3 disulfide bridges follow: C30/C75, C42/C88, and C74/C79. Residues 49 to 64 (GGAQYAPYWQETYLRS) constitute a propeptide, c peptide like.

Belongs to the insulin family. As to quaternary structure, heterodimer of a B chain and an A chain linked by two disulfide bonds.

It is found in the secreted. Its function is as follows. Brain peptide responsible for activation of prothoracic glands to produce ecdysone in insects. This Bombyx mori (Silk moth) protein is Bombyxin B-9 (BBXB9).